Here is a 183-residue protein sequence, read N- to C-terminus: Capsid protein (183 aa).

A disordered region spans residues N136–C183. Residues V149–S176 show a composition bias toward basic residues. Phosphoserine; by host is present on residues S155, S162, and S170. The stretch at S155–P161 is one 1; half-length repeat. Positions S155–Q177 are 3 X 8 AA repeats of S-P-R-R-R-[PR]-S-Q. Residues R158–R175 carry the Bipartite nuclear localization signal motif. 2 consecutive repeat copies span residues S162–Q169 and S170–Q177. The tract at residues Q177–C183 is RNA binding.

Belongs to the orthohepadnavirus core antigen family. As to quaternary structure, homodimerizes, then multimerizes. Interacts with cytosol exposed regions of viral L glycoprotein present in the reticulum-to-Golgi compartment. Interacts with human FLNB. Phosphorylated form interacts with host importin alpha; this interaction depends on the exposure of the NLS, which itself depends upon genome maturation and/or phosphorylation of the capsid protein. Interacts with host NUP153. In terms of processing, phosphorylated by host SRPK1, SRPK2, and maybe protein kinase C or GAPDH. Phosphorylation is critical for pregenomic RNA packaging. Protein kinase C phosphorylation is stimulated by HBx protein and may play a role in transport of the viral genome to the nucleus at the late step during the viral replication cycle.

The protein localises to the virion. Its subcellular location is the host cytoplasm. In terms of biological role, self assembles to form an icosahedral capsid. Most capsids appear to be large particles with an icosahedral symmetry of T=4 and consist of 240 copies of capsid protein, though a fraction forms smaller T=3 particles consisting of 180 capsid proteins. Entering capsids are transported along microtubules to the nucleus. Phosphorylation of the capsid is thought to induce exposure of nuclear localization signal in the C-terminal portion of the capsid protein that allows binding to the nuclear pore complex via the importin (karyopherin-) alpha and beta. Capsids are imported in intact form through the nuclear pore into the nuclear basket, where it probably binds NUP153. Only capsids that contain the mature viral genome can release the viral DNA and capsid protein into the nucleoplasm. Immature capsids get stuck in the basket. Capsids encapsulate the pre-genomic RNA and the P protein. Pre-genomic RNA is reverse-transcribed into DNA while the capsid is still in the cytoplasm. The capsid can then either be directed to the nucleus, providing more genomes for transcription, or bud through the endoplasmic reticulum to provide new virions. The sequence is that of Capsid protein from Homo sapiens (Human).